A 351-amino-acid polypeptide reads, in one-letter code: Photosystem II D2 protein (351 aa).

The chain crosses the membrane as a helical span at residues 39 to 59 (TAYLAIGGWLTGTTFVTSWYT). Histidine 116 is a chlorophyll a binding site. A helical transmembrane segment spans residues 123 to 139 (GFMLRQFELARLIGIRP). Pheophytin a-binding residues include glutamine 128 and asparagine 141. A helical transmembrane segment spans residues 151-164 (VFVSVFLIYPLGQS). A chlorophyll a-binding site is contributed by histidine 196. The chain crosses the membrane as a helical span at residues 206–226 (GALLSAIHGVTVENTLYQDGE). Positions 213 and 260 each coordinate a plastoquinone. Histidine 213 contacts Fe cation. Histidine 267 serves as a coordination point for Fe cation. A helical transmembrane segment spans residues 277–293 (GLWTSSIGIIGLALNLR).

It belongs to the reaction center PufL/M/PsbA/D family. PSII is composed of 1 copy each of membrane proteins PsbA, PsbB, PsbC, PsbD, PsbE, PsbF, PsbH, PsbI, PsbJ, PsbK, PsbL, PsbM, PsbT, PsbX, PsbY, PsbZ, Psb30/Ycf12, peripheral proteins PsbO, CyanoQ (PsbQ), PsbU, PsbV and a large number of cofactors. It forms dimeric complexes. Requires The D1/D2 heterodimer binds P680, chlorophylls that are the primary electron donor of PSII, and subsequent electron acceptors. It shares a non-heme iron and each subunit binds pheophytin, quinone, additional chlorophylls, carotenoids and lipids. There is also a Cl(-1) ion associated with D1 and D2, which is required for oxygen evolution. The PSII complex binds additional chlorophylls, carotenoids and specific lipids. as cofactor.

It localises to the host cellular thylakoid membrane. The catalysed reaction is 2 a plastoquinone + 4 hnu + 2 H2O = 2 a plastoquinol + O2. Photosystem II (PSII) is a light-driven water:plastoquinone oxidoreductase that uses light energy to abstract electrons from H(2)O, generating O(2) and a proton gradient subsequently used for ATP formation. It consists of a core antenna complex that captures photons, and an electron transfer chain that converts photonic excitation into a charge separation. The D1/D2 (PsbA/PsbD) reaction center heterodimer binds P680, the primary electron donor of PSII as well as several subsequent electron acceptors. D2 is needed for assembly of a stable PSII complex. The polypeptide is Photosystem II D2 protein (psbD) (Synechococcus phage S-RSM2).